A 617-amino-acid chain; its full sequence is Ceramide transfer protein (617 aa).

Residues 1–11 (MSDNQSWNSSG) are compositionally biased toward polar residues. Positions 1 to 23 (MSDNQSWNSSGSEEDLETESGPP) are disordered. Positions 23-117 (PVERCGVLSK…WIDSIEQHKS (95 aa)) constitute a PH domain. Positions 268–302 (REDSWQKRLDKEIEKRRRVEEAYKNAMTELKKKSH) form a coiled coil. Residues 320 to 326 (EFFDAVE) carry the FFAT motif. Basic and acidic residues predominate over residues 332–344 (QDKIEQSQSEKGR). The tract at residues 332 to 355 (QDKIEQSQSEKGRSHWPSSLPSTE) is disordered. The START domain occupies 383-611 (DEHRFRIQVE…FTSYVQEKTA (229 aa)). Positions 466, 487, 524, and 572 each coordinate an N-acylsphing-4-enine.

The protein resides in the cytoplasm. Its subcellular location is the golgi apparatus. The protein localises to the endoplasmic reticulum. The enzyme catalyses N-hexadecanoylsphing-4-enine(in) = N-hexadecanoylsphing-4-enine(out). In terms of biological role, may mediate the intracellular trafficking of ceramide in a non-vesicular manner. This chain is Ceramide transfer protein (cert1), found in Xenopus tropicalis (Western clawed frog).